Consider the following 437-residue polypeptide: Nuclear distribution protein PAC1 (437 aa).

A coiled-coil region spans residues 64–94 (LSVIRLQRKVMDLETRLEAAEREASSTHKAN). 7 WD repeats span residues 114–153 (LHKQPVNAVSFHPFHSTLASACEDGNIRIWDYELGEIETT), 156–217 (AHTR…ANVK), 221–260 (GHDHTISAVKFTASGNHVISASRDKTVRVWSVQSGYCVRT), 263–301 (GHTDWVKSCAALNEEFIFSAGIDHVTRVSEFVSGDGKMT), 304–356 (GHEH…LLIL), 358–397 (GHDNWVRGVVLHPAGRYLVSVSDDKTMRCWDLEQGGRCIR), and 401–437 (AHGHFVTCVAWAPNDVNGRVRCLVATGGVDGQVKVWQ). The tract at residues 165-186 (DFSQPDTGASRDKSHDKPRADV) is disordered. The segment covering 173 to 186 (ASRDKSHDKPRADV) has biased composition (basic and acidic residues).

It belongs to the WD repeat LIS1/nudF family. Self-associates. Interacts with NDL1 and dynein.

The protein localises to the cytoplasm. It localises to the cytoskeleton. It is found in the spindle pole. In terms of biological role, positively regulates the activity of the minus-end directed microtubule motor protein dynein. Plays a central role in positioning the mitotic spindle at the bud neck during cell division. Targets cytoplasmic dynein to microtubule plus ends, thereby promoting dynein-mediated microtubule sliding along the bud cortex and consequently the movement of the mitotic spindle to the bud neck. The polypeptide is Nuclear distribution protein PAC1 (Yarrowia lipolytica (strain CLIB 122 / E 150) (Yeast)).